The following is a 336-amino-acid chain: Peroxidase 11 (336 aa).

A signal peptide spans 1–20 (MMRLLFVFFMVHTIFIPCFS). 4 disulfides stabilise this stretch: cysteine 39–cysteine 119, cysteine 72–cysteine 77, cysteine 125–cysteine 331, and cysteine 204–cysteine 236. The active-site Proton acceptor is histidine 70. Ca(2+) contacts are provided by aspartate 71, valine 74, glycine 76, aspartate 78, and serine 80. Proline 167 is a substrate binding site. Histidine 197 provides a ligand contact to heme b. Position 198 (threonine 198) interacts with Ca(2+). Asparagine 246 carries N-linked (GlcNAc...) asparagine glycosylation. Residues aspartate 251, threonine 254, and aspartate 259 each contribute to the Ca(2+) site.

It belongs to the peroxidase family. Classical plant (class III) peroxidase subfamily. Heme b is required as a cofactor. Ca(2+) serves as cofactor. As to expression, expressed in roots and stems.

It localises to the secreted. The catalysed reaction is 2 a phenolic donor + H2O2 = 2 a phenolic radical donor + 2 H2O. In terms of biological role, removal of H(2)O(2), oxidation of toxic reductants, biosynthesis and degradation of lignin, suberization, auxin catabolism, response to environmental stresses such as wounding, pathogen attack and oxidative stress. These functions might be dependent on each isozyme/isoform in each plant tissue. In Arabidopsis thaliana (Mouse-ear cress), this protein is Peroxidase 11 (PER11).